The chain runs to 446 residues: GTPase Der (446 aa).

EngA-type G domains follow at residues 3–167 (PVLA…AFDE) and 180–353 (IRLA…ASAT). Residues 9–16 (GRPNVGKS), 56–60 (DTGGF), 119–122 (NKAE), 186–193 (GRPNVGKS), 233–237 (DTAGL), and 298–301 (NKWD) each bind GTP. Positions 354–438 (KKLATPVLTR…PMRIEMKSSR (85 aa)) constitute a KH-like domain.

The protein belongs to the TRAFAC class TrmE-Era-EngA-EngB-Septin-like GTPase superfamily. EngA (Der) GTPase family. In terms of assembly, associates with the 50S ribosomal subunit.

Its function is as follows. GTPase that plays an essential role in the late steps of ribosome biogenesis. The chain is GTPase Der from Methylibium petroleiphilum (strain ATCC BAA-1232 / LMG 22953 / PM1).